A 3326-amino-acid chain; its full sequence is Deoxyribonuclease CdiA (3326 aa).

The tract at residues 36 to 342 (TADGVLTSGG…ARGALTLTGS (307 aa)) is two-partner system transport domain (TPS). An FHA-1 region spans residues 343 to 1396 (YAGAGSLYSD…ITVRTGTLTN (1054 aa)). The segment at 1397-1765 (QREGLVVTES…QQLGSPSLTD (369 aa)) is receptor binding domain (RBD). The tract at residues 1766–1951 (YPLPTSQSGL…LAQADKTNLQ (186 aa)) is YP domain. The segment at 1959 to 2097 (SVSLSAGGDI…AGGPLQLAAG (139 aa)) is periplasmic FHA-1 repeat (pFR). The tract at residues 2125-2660 (QGLVQSTVAS…SNRYDSKQTS (536 aa)) is FHA-2. The VENN CT cleavage motif motif lies at 3060–3063 (VENN). The tract at residues 3060 to 3326 (VENNSLGDIA…DRNRQIGVIK (267 aa)) is CT domain.

The protein in the N-terminal section; belongs to the CdiA toxin family. The C-terminal (CT) domain interacts with cognate CdiI but not non-cognate CdiI from E.coli strain 536 / UPEC.

Its subcellular location is the target cell. The protein localises to the target cell cytoplasm. Its function is as follows. Toxic component of a toxin-immunity protein module, which functions as a cellular contact-dependent growth inhibition (CDI) system. CDI modules allow bacteria to communicate with and inhibit the growth of closely related neighboring bacteria in a contact-dependent fashion. CDI is neutralized by its cognate immunity protein CdiI, but not by non-cognate CdiI from other bacteria. The C-terminal domain (CT) has strong DNase activity; this activity is inhibited by cognate CdiI. The CdiA protein is thought to be exported from the cell through the central lumen of CdiB, the other half of its two-partner system (TPS). The TPS domain probably remains associated with CdiB while the FHA-1 domain forms an extended filament with the receptor-binding domain (RBD) at its extremity; in the secretion arrested state the C-terminus of the RBD and YP domains form a hairpin-like structure as the FHA-2, PT and CT domains are periplasmic. The YP domain is probably responsible for this arrest at the point where it re-enters the host cell periplasm. Upon binding to a target cell outer membrane receptor a signal is transmitted to activate secretion. The filament elongates slightly, the rest of CdiA is secreted and the FHA-2 domain becomes stably associated with the target cell's outer membrane where it facilitates entry of the toxic CT domain into the target cell periplasm. From there the toxic CT domain is cleaved and gains access to the target cell cytoplasm via an inner membrane protein. The protein is Deoxyribonuclease CdiA of Dickeya dadantii (strain 3937) (Erwinia chrysanthemi (strain 3937)).